Consider the following 431-residue polypeptide: Peptidase B (431 aa).

Mn(2+)-binding residues include Lys-196 and Asp-201. Residue Lys-208 is part of the active site. The Mn(2+) site is built by Asp-219, Asp-278, and Glu-280. Residue Arg-282 is part of the active site.

This sequence belongs to the peptidase M17 family. Homohexamer. Requires Mn(2+) as cofactor.

The protein resides in the cytoplasm. It catalyses the reaction Release of an N-terminal amino acid, Xaa, from a peptide or arylamide. Xaa is preferably Glu or Asp but may be other amino acids, including Leu, Met, His, Cys and Gln.. In terms of biological role, probably plays an important role in intracellular peptide degradation. This Serratia proteamaculans (strain 568) protein is Peptidase B.